The following is a 550-amino-acid chain: Medium-chain acyl-CoA ligase Mig (550 aa).

The first 19 residues, 1 to 19, serve as a signal peptide directing secretion; it reads MSDTTTAFTVPAVAKAVAA.

This sequence belongs to the ATP-dependent AMP-binding enzyme family.

It localises to the secreted. The protein localises to the cell wall. The catalysed reaction is a medium-chain fatty acid + ATP + CoA = a medium-chain fatty acyl-CoA + AMP + diphosphate. It catalyses the reaction hexanoate + ATP + CoA = hexanoyl-CoA + AMP + diphosphate. It carries out the reaction heptanoate + ATP + CoA = heptanoyl-CoA + AMP + diphosphate. The enzyme catalyses octanoate + ATP + CoA = octanoyl-CoA + AMP + diphosphate. The catalysed reaction is decanoate + ATP + CoA = decanoyl-CoA + AMP + diphosphate. It catalyses the reaction dodecanoate + ATP + CoA = dodecanoyl-CoA + AMP + diphosphate. It carries out the reaction tetradecanoate + ATP + CoA = tetradecanoyl-CoA + AMP + diphosphate. The enzyme catalyses (9Z)-octadecenoate + ATP + CoA = (9Z)-octadecenoyl-CoA + AMP + diphosphate. The catalysed reaction is (9Z,12Z,15Z)-octadecatrienoate + ATP + CoA = (9Z,12Z,15Z)-octadecatrienoyl-CoA + AMP + diphosphate. It catalyses the reaction (5Z,8Z,11Z,14Z)-eicosatetraenoate + ATP + CoA = (5Z,8Z,11Z,14Z)-eicosatetraenoyl-CoA + AMP + diphosphate. Its pathway is lipid metabolism; fatty acid metabolism. Its activity is regulated as follows. Inhibited by 2-hydroxydodecanoic acid, a typical inhibitor of medium-chain acyl-CoA synthetases. Catalyzes the activation of medium-chain fatty acids as acyl-coenzyme A (acyl-CoA). Shows maximal activity with saturated fatty acids of medium-chain length between C6 and C12. Has lower activity with tridecanoic acid (C13), tetradecanoic acid (C14) and with unsaturated fatty acids like oleic acid (C18:1), linolenic acid (C18:3) and arachidonic acid (C20:4). Shows weak activity with some aromatic carbon acids. Involved in the metabolism of fatty acid during mycobacterial survival in macrophages. This is Medium-chain acyl-CoA ligase Mig from Mycobacterium avium.